Here is a 205-residue protein sequence, read N- to C-terminus: Holliday junction branch migration complex subunit RuvA (205 aa).

Positions 1 to 64 are domain I; it reads MIGKLKGVVD…EDQIRLFGFS (64 aa). A domain II region spans residues 65–143; the sequence is SAAERDWFRL…GFSASEPLAA (79 aa). The segment at 144-152 is flexible linker; sequence QLGGGGVAS. The segment at 153 to 205 is domain III; it reads AQGGAAADAVSALVNLGYGVPQANAAIAAALRGAGEGAKTEVLIRLGLKELAK.

The protein belongs to the RuvA family. As to quaternary structure, homotetramer. Forms an RuvA(8)-RuvB(12)-Holliday junction (HJ) complex. HJ DNA is sandwiched between 2 RuvA tetramers; dsDNA enters through RuvA and exits via RuvB. An RuvB hexamer assembles on each DNA strand where it exits the tetramer. Each RuvB hexamer is contacted by two RuvA subunits (via domain III) on 2 adjacent RuvB subunits; this complex drives branch migration. In the full resolvosome a probable DNA-RuvA(4)-RuvB(12)-RuvC(2) complex forms which resolves the HJ.

The protein localises to the cytoplasm. The RuvA-RuvB-RuvC complex processes Holliday junction (HJ) DNA during genetic recombination and DNA repair, while the RuvA-RuvB complex plays an important role in the rescue of blocked DNA replication forks via replication fork reversal (RFR). RuvA specifically binds to HJ cruciform DNA, conferring on it an open structure. The RuvB hexamer acts as an ATP-dependent pump, pulling dsDNA into and through the RuvAB complex. HJ branch migration allows RuvC to scan DNA until it finds its consensus sequence, where it cleaves and resolves the cruciform DNA. The polypeptide is Holliday junction branch migration complex subunit RuvA (Xanthobacter autotrophicus (strain ATCC BAA-1158 / Py2)).